The following is a 354-amino-acid chain: uncharacterized protein (354 aa).

It belongs to the asfivirus B354L family.

This is an uncharacterized protein from Ornithodoros (relapsing fever ticks).